The chain runs to 221 residues: N-(5'-phosphoribosyl)anthranilate isomerase (221 aa).

This sequence belongs to the TrpF family.

It catalyses the reaction N-(5-phospho-beta-D-ribosyl)anthranilate = 1-(2-carboxyphenylamino)-1-deoxy-D-ribulose 5-phosphate. The protein operates within amino-acid biosynthesis; L-tryptophan biosynthesis; L-tryptophan from chorismate: step 3/5. The sequence is that of N-(5'-phosphoribosyl)anthranilate isomerase from Parabacteroides distasonis (strain ATCC 8503 / DSM 20701 / CIP 104284 / JCM 5825 / NCTC 11152).